A 443-amino-acid polypeptide reads, in one-letter code: Glutamate--tRNA ligase 1 (443 aa).

The short motif at 8-18 is the 'HIGH' region element; the sequence is PSPTGRLHVGN. Positions 239–243 match the 'KMSKS' region motif; the sequence is KLSKR. Lys-242 lines the ATP pocket.

The protein belongs to the class-I aminoacyl-tRNA synthetase family. Glutamate--tRNA ligase type 1 subfamily. In terms of assembly, monomer.

Its subcellular location is the cytoplasm. The enzyme catalyses tRNA(Glu) + L-glutamate + ATP = L-glutamyl-tRNA(Glu) + AMP + diphosphate. Its function is as follows. Catalyzes the attachment of glutamate to tRNA(Glu) in a two-step reaction: glutamate is first activated by ATP to form Glu-AMP and then transferred to the acceptor end of tRNA(Glu). In Rhizorhabdus wittichii (strain DSM 6014 / CCUG 31198 / JCM 15750 / NBRC 105917 / EY 4224 / RW1) (Sphingomonas wittichii), this protein is Glutamate--tRNA ligase 1.